A 248-amino-acid polypeptide reads, in one-letter code: uncharacterized protein (248 aa).

Belongs to the glycosyltransferase 2 family.

This is an uncharacterized protein from Acanthamoeba polyphaga (Amoeba).